The chain runs to 290 residues: UPF0761 membrane protein YihY (290 aa).

6 helical membrane passes run 44 to 64, 104 to 124, 140 to 160, 183 to 203, 210 to 230, and 244 to 264; these read LLSL…FPMF, VGAC…DSAL, FAVY…SLAI, ILPL…VPTT, ALVG…GFAL, and VLAV…IVLL.

The protein belongs to the UPF0761 family.

The protein resides in the cell inner membrane. The sequence is that of UPF0761 membrane protein YihY from Salmonella agona (strain SL483).